We begin with the raw amino-acid sequence, 353 residues long: Dihydroorotate dehydrogenase (quinone) (353 aa).

FMN contacts are provided by residues 66-70 (AGFDK) and T90. A substrate-binding site is contributed by K70. Residue 115–119 (NRMGF) participates in substrate binding. Residues N143 and N176 each coordinate FMN. N176 lines the substrate pocket. S179 acts as the Nucleophile in catalysis. Residue N181 participates in substrate binding. Residues K212 and T240 each coordinate FMN. Residue 241 to 242 (NT) coordinates substrate. Residues G264, G293, and 314–315 (YT) contribute to the FMN site.

The protein belongs to the dihydroorotate dehydrogenase family. Type 2 subfamily. In terms of assembly, monomer. It depends on FMN as a cofactor.

It is found in the cell membrane. It catalyses the reaction (S)-dihydroorotate + a quinone = orotate + a quinol. Its pathway is pyrimidine metabolism; UMP biosynthesis via de novo pathway; orotate from (S)-dihydroorotate (quinone route): step 1/1. Functionally, catalyzes the conversion of dihydroorotate to orotate with quinone as electron acceptor. This chain is Dihydroorotate dehydrogenase (quinone), found in Mycolicibacterium gilvum (strain PYR-GCK) (Mycobacterium gilvum (strain PYR-GCK)).